Reading from the N-terminus, the 153-residue chain is uncharacterized protein (153 aa).

Helical transmembrane passes span 16–36 (ILACLLLIFLMATIFLLILEI) and 97–117 (ALTTTLSIILLVCIIMACIIC).

Its subcellular location is the membrane. This is an uncharacterized protein from Human herpesvirus 6A (strain Uganda-1102) (HHV-6 variant A).